A 441-amino-acid chain; its full sequence is Ribosomal protein uS12 methylthiotransferase RimO (441 aa).

The MTTase N-terminal domain occupies 7 to 117; the sequence is PKISFVSLGC…VLEAVHRARP (111 aa). [4Fe-4S] cluster is bound by residues Cys-16, Cys-52, Cys-81, Cys-148, Cys-152, and Cys-155. One can recognise a Radical SAM core domain in the interval 134–371; that stretch reads LTPRHYAYLK…MARQQAISAR (238 aa). The 67-residue stretch at 374-440 folds into the TRAM domain; the sequence is KRKVGTRQQV…AYDLHGTVAG (67 aa).

It belongs to the methylthiotransferase family. RimO subfamily. The cofactor is [4Fe-4S] cluster.

It localises to the cytoplasm. The catalysed reaction is L-aspartate(89)-[ribosomal protein uS12]-hydrogen + (sulfur carrier)-SH + AH2 + 2 S-adenosyl-L-methionine = 3-methylsulfanyl-L-aspartate(89)-[ribosomal protein uS12]-hydrogen + (sulfur carrier)-H + 5'-deoxyadenosine + L-methionine + A + S-adenosyl-L-homocysteine + 2 H(+). Its function is as follows. Catalyzes the methylthiolation of an aspartic acid residue of ribosomal protein uS12. The polypeptide is Ribosomal protein uS12 methylthiotransferase RimO (Rhodopseudomonas palustris (strain ATCC BAA-98 / CGA009)).